We begin with the raw amino-acid sequence, 116 residues long: Large ribosomal subunit protein bL20 (116 aa).

The protein belongs to the bacterial ribosomal protein bL20 family.

Functionally, binds directly to 23S ribosomal RNA and is necessary for the in vitro assembly process of the 50S ribosomal subunit. It is not involved in the protein synthesizing functions of that subunit. This chain is Large ribosomal subunit protein bL20, found in Helicobacter pylori (strain P12).